Reading from the N-terminus, the 142-residue chain is Large ribosomal subunit protein uL13 (142 aa).

This sequence belongs to the universal ribosomal protein uL13 family. As to quaternary structure, part of the 50S ribosomal subunit.

In terms of biological role, this protein is one of the early assembly proteins of the 50S ribosomal subunit, although it is not seen to bind rRNA by itself. It is important during the early stages of 50S assembly. This Alteromonas mediterranea (strain DSM 17117 / CIP 110805 / LMG 28347 / Deep ecotype) protein is Large ribosomal subunit protein uL13.